Reading from the N-terminus, the 465-residue chain is E3 ubiquitin-protein ligase parkin (465 aa).

Residues 1–76 (MIVFVRFNSS…VHIVQRPQRK (76 aa)) enclose the Ubiquitin-like domain. Position 65 is a phosphoserine; by PINK1 (serine 65). Residues 71–96 (QRPQRKSHETNASGGDKPQSTPEGSI) are disordered. Residues 77 to 237 (SHETNASGGD…LITNNSRSIP (161 aa)) form a necessary for PINK1-dependent localization to mitochondria region. Threonine 80 carries the post-translational modification Phosphothreonine. Polar residues predominate over residues 80 to 93 (TNASGGDKPQSTPE). The RING-type 0; atypical zinc-finger motif lies at 141 to 225 (PTYHSFFVYC…PTSDKDTSVA (85 aa)). Threonine 175 is subject to Phosphothreonine; by PINK1. The segment at 204-238 (TRAEFFFKCGAHPTSDKDTSVALNLITNNSRSIPC) is SYT11 binding 1. Residue threonine 217 is modified to Phosphothreonine. The interval 234-465 (RSIPCIACTD…ACMGDHWFDV (232 aa)) is TRIAD supradomain. Zn(2+) contacts are provided by cysteine 238, cysteine 241, cysteine 253, histidine 257, cysteine 260, cysteine 263, cysteine 289, cysteine 293, cysteine 332, and cysteine 337. The segment at 238–293 (CIACTDVRNPVLVFQCNHRHVICLDCFHLYCVTRLNDRQFVHDAQLGYSLPCVAGC) adopts an RING-type 1 zinc-finger fold. The tract at residues 257–293 (HVICLDCFHLYCVTRLNDRQFVHDAQLGYSLPCVAGC) is SYT11 binding 2. The IBR-type zinc finger occupies 313 to 377 (NRYQQYGAEE…CKEAYHEGEC (65 aa)). Lysine 349 participates in a covalent cross-link: Glycyl lysine isopeptide (Lys-Gly) (interchain with G-Cter in ISG15). 4 residues coordinate Zn(2+): cysteine 352, cysteine 360, cysteine 365, and cysteine 368. A Glycyl lysine isopeptide (Lys-Gly) (interchain with G-Cter in ISG15) cross-link involves residue lysine 369. Histidine 373 and cysteine 377 together coordinate Zn(2+). The tract at residues 378–410 (DSMFEASGATSQAYRVDQRAAEQARWEEASKET) is REP. Zn(2+) contacts are provided by cysteine 418 and cysteine 421. An RING-type 2; atypical zinc finger spans residues 418–449 (CPRCNVPIEKNGGCMHMKCPQPQCKLEWCWNC). Cysteine 431 is an active-site residue. Residues cysteine 436, cysteine 441, cysteine 446, cysteine 449, cysteine 457, and histidine 461 each contribute to the Zn(2+) site.

The protein belongs to the RBR family. Parkin subfamily. In terms of assembly, forms an E3 ubiquitin ligase complex with UBE2L3 or UBE2L6. Mediates 'Lys-63'-linked polyubiquitination by associating with UBE2V1. Part of a SCF-like complex, consisting of PRKN, CUL1 and FBXW7. Interacts with SNCAIP. Binds to the C2A and C2B domains of SYT11. Interacts and regulates the turnover of SEPTIN5. Part of a complex, including STUB1, HSP70 and GPR37. The amount of STUB1 in the complex increases during ER stress. STUB1 promotes the dissociation of HSP70 from PRKN and GPR37, thus facilitating PRKN-mediated GPR37 ubiquitination. HSP70 transiently associates with unfolded GPR37 and inhibits the E3 activity of PRKN, whereas, STUB1 enhances the E3 activity of PRKN through promotion of dissociation of HSP70 from PRKN-GPR37 complexes. Interacts with PSMD4 and PACRG. Interacts with LRRK2. Interacts with RANBP2. Interacts with SUMO1 but not SUMO2, which promotes nuclear localization and autoubiquitination. Interacts (via first RING-type domain) with AIMP2 (via N-terminus). Interacts with PSMA7 and RNF41. Interacts with PINK1. Forms a complex with PINK1 and PARK7. Interacts with CHPF, the interaction with isoform 2 may facilitate PRKN transport into the mitochondria. Interacts with MFN2 (phosphorylated), promotes PRKN localization in dysfunctional depolarized mitochondria. Interacts with FBXO7; this promotes translocation to dysfunctional depolarized mitochondria. Interacts with ZNF746. Interacts with heat shock protein 70 family members, including HSPA1L, HSPA1A and HSPA8; interaction HSPA1L promotes translocation to damaged mitochondria. Interacts with BAG4 and, to a lesser extent, BAG5; interaction with BAG4 inhibits translocation to damaged mitochondria. Forms a complex with PRKN and PARK7. Interacts with AMBRA1. Post-translationally, auto-ubiquitinates in an E2-dependent manner leading to its own degradation. Also polyubiquitinated by RNF41 for proteasomal degradation. In terms of processing, S-nitrosylated. Phosphorylated. Activation requires phosphorylation at Ser-65 by PINK1 and binding to PINK1 phosphorylated ubiquitin. Phosphorylation at Thr-175 by PINK1 and at Thr-217 is important for mitochondrial localization. In terms of tissue distribution, largely confined to neuronal elements, including fibers and neuropil. Highly expressed at the forebrain level, in pyramidal cells of layer V, in various cortical regions and cerebellum. Expressed in the nucleus of diagonal band of Broca, nucleus basalis, bed nucleus of the stria terminalis, and olfactory tubercle. Moderate expression is seen in most neurons of the subthalamic nucleus, heart, skeletal muscle and testis. Moderate expression was found in frontal cortex, parietal cortex, cerebellum, heart, skeletal muscle and testis.

The protein localises to the cytoplasm. The protein resides in the cytosol. It localises to the nucleus. It is found in the endoplasmic reticulum. Its subcellular location is the mitochondrion. The protein localises to the mitochondrion outer membrane. The protein resides in the cell projection. It localises to the neuron projection. It is found in the postsynaptic density. Its subcellular location is the presynapse. It catalyses the reaction [E2 ubiquitin-conjugating enzyme]-S-ubiquitinyl-L-cysteine + [acceptor protein]-L-lysine = [E2 ubiquitin-conjugating enzyme]-L-cysteine + [acceptor protein]-N(6)-ubiquitinyl-L-lysine.. It participates in protein modification; protein ubiquitination. In the autoinhibited state the side chain of Phe-463 inserts into a hydrophobic groove in RING-0, occluding the ubiquitin acceptor site Cys-431, whereas the REP repressor element binds RING-1 and blocks its E2-binding site. Activation of PRKN requires 2 steps: (1) phosphorylation at Ser-65 by PINK1 and (2) binding to phosphorylated ubiquitin, leading to unlock repression of the catalytic Cys-431 by the RING-0 region via an allosteric mechanism and converting PRKN to its fully-active form. According to another report, phosphorylation at Ser-65 by PINK1 is not essential for activation and only binding to phosphorylated ubiquitin is essential to unlock repression. In addition, ISG15 conjugation positively regulates its ubiquitin E3 ligase activity by suppressing the intramolecular interaction that maintains its autoinhibited conformation. In terms of biological role, functions within a multiprotein E3 ubiquitin ligase complex, catalyzing the covalent attachment of ubiquitin moieties onto substrate proteins. Substrates include SYT11 and VDAC1. Other substrates are BCL2, CCNE1, GPR37, RHOT1/MIRO1, MFN1, MFN2, STUB1, SNCAIP, SEPTIN5, TOMM20, USP30, ZNF746, MIRO1 and AIMP2. Mediates monoubiquitination as well as 'Lys-6', 'Lys-11', 'Lys-48'-linked and 'Lys-63'-linked polyubiquitination of substrates depending on the context. Participates in the removal and/or detoxification of abnormally folded or damaged protein by mediating 'Lys-63'-linked polyubiquitination of misfolded proteins such as PARK7: 'Lys-63'-linked polyubiquitinated misfolded proteins are then recognized by HDAC6, leading to their recruitment to aggresomes, followed by degradation. Mediates 'Lys-63'-linked polyubiquitination of a 22 kDa O-linked glycosylated isoform of SNCAIP, possibly playing a role in Lewy-body formation. Mediates monoubiquitination of BCL2, thereby acting as a positive regulator of autophagy. Protects against mitochondrial dysfunction during cellular stress, by acting downstream of PINK1 to coordinate mitochondrial quality control mechanisms that remove and replace dysfunctional mitochondrial components. Depending on the severity of mitochondrial damage and/or dysfunction, activity ranges from preventing apoptosis and stimulating mitochondrial biogenesis to regulating mitochondrial dynamics and eliminating severely damaged mitochondria via mitophagy. Activation and recruitment onto the outer membrane of damaged/dysfunctional mitochondria (OMM) requires PINK1-mediated phosphorylation of both PRKN and ubiquitin. After mitochondrial damage, functions with PINK1 to mediate the decision between mitophagy or preventing apoptosis by inducing either the poly- or monoubiquitination of VDAC1, respectively; polyubiquitination of VDAC1 promotes mitophagy, while monoubiquitination of VDAC1 decreases mitochondrial calcium influx which ultimately inhibits apoptosis. When cellular stress results in irreversible mitochondrial damage, promotes the autophagic degradation of dysfunctional depolarized mitochondria (mitophagy) by promoting the ubiquitination of mitochondrial proteins such as TOMM20, RHOT1/MIRO1, MFN1 and USP30. Preferentially assembles 'Lys-6'-, 'Lys-11'- and 'Lys-63'-linked polyubiquitin chains, leading to mitophagy. The PINK1-PRKN pathway also promotes fission of damaged mitochondria by PINK1-mediated phosphorylation which promotes the PRKN-dependent degradation of mitochondrial proteins involved in fission such as MFN2. This prevents the refusion of unhealthy mitochondria with the mitochondrial network or initiates mitochondrial fragmentation facilitating their later engulfment by autophagosomes. Regulates motility of damaged mitochondria via the ubiquitination and subsequent degradation of MIRO1 and MIRO2; in motor neurons, this likely inhibits mitochondrial intracellular anterograde transport along the axons which probably increases the chance of the mitochondria undergoing mitophagy in the soma. Involved in mitochondrial biogenesis via the 'Lys-48'-linked polyubiquitination of transcriptional repressor ZNF746/PARIS which leads to its subsequent proteasomal degradation and allows activation of the transcription factor PPARGC1A. Limits the production of reactive oxygen species (ROS). Regulates cyclin-E during neuronal apoptosis. In collaboration with CHPF isoform 2, may enhance cell viability and protect cells from oxidative stress. Independently of its ubiquitin ligase activity, protects from apoptosis by the transcriptional repression of p53/TP53. May protect neurons against alpha synuclein toxicity, proteasomal dysfunction, GPR37 accumulation, and kainate-induced excitotoxicity. May play a role in controlling neurotransmitter trafficking at the presynaptic terminal and in calcium-dependent exocytosis. May represent a tumor suppressor gene. The protein is E3 ubiquitin-protein ligase parkin of Rattus norvegicus (Rat).